Here is a 97-residue protein sequence, read N- to C-terminus: HssA/B-like protein 27 (97 aa).

The protein belongs to the hssA/B family.

This chain is HssA/B-like protein 27 (hssl27), found in Dictyostelium discoideum (Social amoeba).